The following is a 461-amino-acid chain: Siroheme synthase (461 aa).

The interval 1–204 (MDYFPIFCQL…GDTTQAQQQV (204 aa)) is precorrin-2 dehydrogenase /sirohydrochlorin ferrochelatase. NAD(+)-binding positions include 22–23 (EV) and 43–44 (GR). Ser-128 is subject to Phosphoserine. A uroporphyrinogen-III C-methyltransferase region spans residues 216 to 461 (GEVTLVGAGP…NWFRCEAASA (246 aa)). S-adenosyl-L-methionine is bound at residue Pro-225. Residue Asp-248 is the Proton acceptor of the active site. Residue Lys-270 is the Proton donor of the active site. Residues 301–303 (GGD), Ile-306, 331–332 (TA), Met-382, and Gly-411 contribute to the S-adenosyl-L-methionine site.

This sequence in the N-terminal section; belongs to the precorrin-2 dehydrogenase / sirohydrochlorin ferrochelatase family. In the C-terminal section; belongs to the precorrin methyltransferase family.

It catalyses the reaction uroporphyrinogen III + 2 S-adenosyl-L-methionine = precorrin-2 + 2 S-adenosyl-L-homocysteine + H(+). The enzyme catalyses precorrin-2 + NAD(+) = sirohydrochlorin + NADH + 2 H(+). The catalysed reaction is siroheme + 2 H(+) = sirohydrochlorin + Fe(2+). It functions in the pathway cofactor biosynthesis; adenosylcobalamin biosynthesis; precorrin-2 from uroporphyrinogen III: step 1/1. It participates in cofactor biosynthesis; adenosylcobalamin biosynthesis; sirohydrochlorin from precorrin-2: step 1/1. The protein operates within porphyrin-containing compound metabolism; siroheme biosynthesis; precorrin-2 from uroporphyrinogen III: step 1/1. Its pathway is porphyrin-containing compound metabolism; siroheme biosynthesis; siroheme from sirohydrochlorin: step 1/1. It functions in the pathway porphyrin-containing compound metabolism; siroheme biosynthesis; sirohydrochlorin from precorrin-2: step 1/1. Multifunctional enzyme that catalyzes the SAM-dependent methylations of uroporphyrinogen III at position C-2 and C-7 to form precorrin-2 via precorrin-1. Then it catalyzes the NAD-dependent ring dehydrogenation of precorrin-2 to yield sirohydrochlorin. Finally, it catalyzes the ferrochelation of sirohydrochlorin to yield siroheme. This Edwardsiella ictaluri (strain 93-146) protein is Siroheme synthase.